Here is a 377-residue protein sequence, read N- to C-terminus: Succinyl-diaminopimelate desuccinylase (377 aa).

Position 67 (H67) interacts with Zn(2+). D69 is a catalytic residue. D100 is a Zn(2+) binding site. E134 acts as the Proton acceptor in catalysis. The Zn(2+) site is built by E135, E163, and H349.

Belongs to the peptidase M20A family. DapE subfamily. As to quaternary structure, homodimer. Zn(2+) is required as a cofactor. Requires Co(2+) as cofactor.

The catalysed reaction is N-succinyl-(2S,6S)-2,6-diaminopimelate + H2O = (2S,6S)-2,6-diaminopimelate + succinate. It functions in the pathway amino-acid biosynthesis; L-lysine biosynthesis via DAP pathway; LL-2,6-diaminopimelate from (S)-tetrahydrodipicolinate (succinylase route): step 3/3. Functionally, catalyzes the hydrolysis of N-succinyl-L,L-diaminopimelic acid (SDAP), forming succinate and LL-2,6-diaminopimelate (DAP), an intermediate involved in the bacterial biosynthesis of lysine and meso-diaminopimelic acid, an essential component of bacterial cell walls. This is Succinyl-diaminopimelate desuccinylase from Mannheimia succiniciproducens (strain KCTC 0769BP / MBEL55E).